We begin with the raw amino-acid sequence, 141 residues long: MKRALYLNKQYIPWGILNHKTLKNETVVLEKYNEINSSIGPVFHCKNLFVDSCDKDFVYFFVNKKFFPNVKKLYLASNPCSPEVLWRDFDTIYLTEIFSHYKNQWANNYKNVKIIPNNKFFYELQDYAPERIILEKEHDLY.

Belongs to the mimivirus L163/R849 family.

This is an uncharacterized protein from Acanthamoeba polyphaga mimivirus (APMV).